Here is a 31-residue protein sequence, read N- to C-terminus: Sarcolipin (31 aa).

At methionine 1 to glutamate 7 the chain is on the cytoplasmic side. The chain crosses the membrane as a helical span at residues leucine 8–valine 26. Residues arginine 27–tyrosine 31 are Lumenal-facing.

The protein belongs to the sarcolipin family. Homooligomer. Can also form heterooligomers with other sarcoplasmic/endoplasmic reticulum calcium ATPase (SERCA) regulators ARLN, ERLN, PLN and STRIT1/DWORF. Monomer. Interacts with calcium ATPase ATP2A1/SERCA1. Interacts as a monomer with ATP2A2/SERCA2; the interaction decreases ATP2A2 Ca(2+) affinity. Interacts with VMP1; VMP1 competes with PLN and SLN to prevent them from forming an inhibitory complex with ATP2A2. As to expression, skeletal muscle (at protein level).

It is found in the sarcoplasmic reticulum membrane. Its subcellular location is the endoplasmic reticulum membrane. In terms of biological role, reversibly inhibits the activity of ATP2A1/SERCA1 and ATP2A2/SERCA2 in sarcoplasmic reticulum by decreasing the apparent affinity of the ATPase for Ca(2+). Also inhibits the activity of ATP2A3/SERCA3. Modulates calcium re-uptake during muscle relaxation and plays an important role in calcium homeostasis in muscle. Required for muscle-based, non-shivering thermogenesis. This chain is Sarcolipin (SLN), found in Oryctolagus cuniculus (Rabbit).